The sequence spans 129 residues: L-ectoine synthase (129 aa).

The protein belongs to the ectoine synthase family.

It carries out the reaction (2S)-4-acetamido-2-aminobutanoate = L-ectoine + H2O. The protein operates within amine and polyamine biosynthesis; ectoine biosynthesis; L-ectoine from L-aspartate 4-semialdehyde: step 3/3. Its function is as follows. Catalyzes the circularization of gamma-N-acetyl-alpha,gamma-diaminobutyric acid (ADABA) to ectoine (1,4,5,6-tetrahydro-2-methyl-4-pyrimidine carboxylic acid), which is an excellent osmoprotectant. The polypeptide is L-ectoine synthase (Mycobacterium sp. (strain KMS)).